The sequence spans 130 residues: MMRQSLQAVLPKISGNKTSLLRKSVCSDLLTLFNSPHSALPSLLVSGMPEWQVHNPSDKHLQSWYCRQLRSALLFHEPRIAALQVNLKEAYCHTLAISLEIMLYHDDEPLTFDLVWDNGGWRSATLENVS.

Belongs to the GpW/Gp25 family. IraD subfamily. In terms of assembly, interacts with RssB.

The protein resides in the cytoplasm. Functionally, inhibits RpoS proteolysis by regulating RssB activity, thereby increasing the stability of the sigma stress factor RpoS during oxidative stress. Its effect on RpoS stability is due to its interaction with RssB, which probably blocks the interaction of RssB with RpoS, and the consequent delivery of the RssB-RpoS complex to the ClpXP protein degradation pathway. This is Anti-adapter protein IraD from Escherichia coli O7:K1 (strain IAI39 / ExPEC).